The primary structure comprises 269 residues: Formamidopyrimidine-DNA glycosylase (269 aa).

Pro2 functions as the Schiff-base intermediate with DNA in the catalytic mechanism. Glu3 (proton donor) is an active-site residue. Lys57 functions as the Proton donor; for beta-elimination activity in the catalytic mechanism. Positions 90, 109, and 150 each coordinate DNA. The FPG-type zinc finger occupies 235 to 269; sequence RVYGRNGEPCRTCGTPIETAKHGQRSTFFCRRCQV. The active-site Proton donor; for delta-elimination activity is Arg259.

The protein belongs to the FPG family. Monomer. It depends on Zn(2+) as a cofactor.

The enzyme catalyses Hydrolysis of DNA containing ring-opened 7-methylguanine residues, releasing 2,6-diamino-4-hydroxy-5-(N-methyl)formamidopyrimidine.. It carries out the reaction 2'-deoxyribonucleotide-(2'-deoxyribose 5'-phosphate)-2'-deoxyribonucleotide-DNA = a 3'-end 2'-deoxyribonucleotide-(2,3-dehydro-2,3-deoxyribose 5'-phosphate)-DNA + a 5'-end 5'-phospho-2'-deoxyribonucleoside-DNA + H(+). In terms of biological role, involved in base excision repair of DNA damaged by oxidation or by mutagenic agents. Acts as a DNA glycosylase that recognizes and removes damaged bases. Has a preference for oxidized purines, such as 7,8-dihydro-8-oxoguanine (8-oxoG). Has AP (apurinic/apyrimidinic) lyase activity and introduces nicks in the DNA strand. Cleaves the DNA backbone by beta-delta elimination to generate a single-strand break at the site of the removed base with both 3'- and 5'-phosphates. This chain is Formamidopyrimidine-DNA glycosylase, found in Pectobacterium atrosepticum (strain SCRI 1043 / ATCC BAA-672) (Erwinia carotovora subsp. atroseptica).